The sequence spans 341 residues: Phenylalanine--tRNA ligase alpha subunit (341 aa).

Residue E256 coordinates Mg(2+).

Belongs to the class-II aminoacyl-tRNA synthetase family. Phe-tRNA synthetase alpha subunit type 1 subfamily. In terms of assembly, tetramer of two alpha and two beta subunits. It depends on Mg(2+) as a cofactor.

It is found in the cytoplasm. The catalysed reaction is tRNA(Phe) + L-phenylalanine + ATP = L-phenylalanyl-tRNA(Phe) + AMP + diphosphate + H(+). This Leptospira interrogans serogroup Icterohaemorrhagiae serovar Lai (strain 56601) protein is Phenylalanine--tRNA ligase alpha subunit.